We begin with the raw amino-acid sequence, 547 residues long: Natural resistance-associated macrophage protein 1 (547 aa).

Residues 1–30 (MTGDKDPQSVSRPNYGSISHPPSSEPQQEP) are disordered. Over 1–54 (MTGDKDPQSVSRPNYGSISHPPSSEPQQEPLRTTYLSEKIPIPDTEPGTFSLRK) the chain is Cytoplasmic. The span at 8-17 (QSVSRPNYGS) shows a compositional bias: polar residues. Residues 21–30 (PPSSEPQQEP) show a composition bias toward low complexity. A helical transmembrane segment spans residues 55 to 75 (LWAFTGPGFLMSIAFLDPGNI). The Extracellular portion of the chain corresponds to 76–81 (ESDLQA). Residues 82-102 (GAVAGFKLLWVLLWATVLGLL) traverse the membrane as a helical segment. Over 103–139 (CQRLAARLGVVTGKDLGEICHLYYPKVPRTLLWLTIE) the chain is Cytoplasmic. A helical membrane pass occupies residues 140 to 160 (LAIVGSDMQEVIGTAIAFSLL). Residues 161–164 (SAGR) are Extracellular-facing. A helical membrane pass occupies residues 165-185 (IPLWGGVLITIVDTFFFLFLD). Residues 186–193 (NYGLRKLE) are Cytoplasmic-facing. Residues 194-214 (AFFGILITIMALTFGYEYVVA) form a helical membrane-spanning segment. At 215-240 (RPAQVALLQGLLLPSCPGCGRPELLQ) the chain is on the extracellular side. The helical transmembrane segment at 241–261 (AVGIVGAIIMPHNIYLHSALV) threads the bilayer. The Cytoplasmic portion of the chain corresponds to 262-286 (KSREIDRSRRPDIREANMYFLIEAS). The chain crosses the membrane as a helical span at residues 287 to 307 (IALSVSFFINLFVVAVFGQAF). Residues 308–346 (YQQTNEAAFNVCANSSLHDYAKIFPRNNLTVEVDIYQGG) are Extracellular-facing. Asn321 and Asn335 each carry an N-linked (GlcNAc...) asparagine glycan. Residues 347–367 (VMLGCVFGPAALYIWAVGLLA) form a helical membrane-spanning segment. The Cytoplasmic segment spans residues 368–394 (AGQSSTMTGTYAGQFVMEGFLRLRWSR). A helical transmembrane segment spans residues 395–415 (FARVLLTRSCAILPTVLVVVF). At 416-432 (RDLKDLSGLNDLLNVLQ) the chain is on the extracellular side. Residues 433 to 453 (SLLLPFAVLPILTFTSMPALM) form a helical membrane-spanning segment. At 454 to 464 (QEFANGRLSKA) the chain is on the cytoplasmic side. The chain crosses the membrane as a helical span at residues 465-485 (ITSFIMALVCAINLYFVVIYL). The Extracellular portion of the chain corresponds to 486–492 (PSLPHPA). The helical transmembrane segment at 493 to 513 (YFILVALLAIVYLGLTTYLVW) threads the bilayer. Over 514–547 (TCFIAHGVTLLAHSSHQHFLYGLPDVEEKGKISG) the chain is Cytoplasmic.

The protein belongs to the NRAMP family.

It localises to the late endosome membrane. It is found in the lysosome membrane. It carries out the reaction Zn(2+)(in) + H(+)(out) = Zn(2+)(out) + H(+)(in). The enzyme catalyses Fe(2+)(in) + H(+)(out) = Fe(2+)(out) + H(+)(in). It catalyses the reaction Mn(2+)(in) + H(+)(out) = Mn(2+)(out) + H(+)(in). Its function is as follows. Macrophage-specific antiporter that fluxes metal ions in either direction against a proton gradient. Localized to late endosomal lysosomal membranes, delivers bivalent cations from the cytosol into these acidic compartments where they may directly affect antimicrobial activity. Involved in iron metabolism and host natural resistance to infection with intracellular parasites. Pathogen resistance involves sequestration of Fe(2+) and Mn(2+), cofactors of both prokaryotic and eukaryotic catalases and superoxide dismutases, not only to protect the macrophage against its own generation of reactive oxygen species, but to deny the cations to the pathogen for synthesis of its protective enzymes. The polypeptide is Natural resistance-associated macrophage protein 1 (SLC11A1) (Canis lupus familiaris (Dog)).